Consider the following 107-residue polypeptide: Nucleoid-associated protein GbCGDNIH1_0260 (107 aa).

This sequence belongs to the YbaB/EbfC family. Homodimer.

Its subcellular location is the cytoplasm. The protein localises to the nucleoid. Binds to DNA and alters its conformation. May be involved in regulation of gene expression, nucleoid organization and DNA protection. In Granulibacter bethesdensis (strain ATCC BAA-1260 / CGDNIH1), this protein is Nucleoid-associated protein GbCGDNIH1_0260.